Here is a 700-residue protein sequence, read N- to C-terminus: Elongation factor G (700 aa).

Positions Glu8–Val290 constitute a tr-type G domain. GTP-binding positions include Ala17–Thr24, Asp88–His92, and Asn142–Asp145.

This sequence belongs to the TRAFAC class translation factor GTPase superfamily. Classic translation factor GTPase family. EF-G/EF-2 subfamily.

The protein resides in the cytoplasm. Its function is as follows. Catalyzes the GTP-dependent ribosomal translocation step during translation elongation. During this step, the ribosome changes from the pre-translocational (PRE) to the post-translocational (POST) state as the newly formed A-site-bound peptidyl-tRNA and P-site-bound deacylated tRNA move to the P and E sites, respectively. Catalyzes the coordinated movement of the two tRNA molecules, the mRNA and conformational changes in the ribosome. In Albidiferax ferrireducens (strain ATCC BAA-621 / DSM 15236 / T118) (Rhodoferax ferrireducens), this protein is Elongation factor G.